Reading from the N-terminus, the 483-residue chain is MHRLTLAQIARGLAAKEFSSVELSEALLARIAELDPGLNSFITVTAEQALEQARAADARRAAGESGALLGAPIAHKDLFCTKGVRTSCASKILDDFIAPYDATVVERLAAAGCVSLGKLNMDEFAMGSASESSHYGPVRNPWNTECVPGGSSGGSAAAVAARLVPAATGSDTGGSIRQPAALTNLTGLKPTYGRVSRWGMIAYASSLDQGGPLARSAEDCALLLSAMAGFDPKDSTCVDQPVDDYLAALHRPLAGLRIGLPREYFGAGLDPRLSDAVMACVEELKKLGATVKEIGLPSMQHAIPAYYVIAPAEASSNLSRFDGVRFGYRCENPQSLEDLYKRSRGEGFGAEVKRRIMVGTYALSAGYYDAYYLKAQKIRRLIRSDFIGAFQEVDLILGPTTPNPAWKLGEKGDDPVAAYLEDIYTITANLAGIPGLSMPAGFVDGLPVGVQLLAPYFQESRLLNVAHQYQQATDWHQRAPEGY.

Active-site charge relay system residues include K76 and S151. S175 functions as the Acyl-ester intermediate in the catalytic mechanism.

This sequence belongs to the amidase family. GatA subfamily. Heterotrimer of A, B and C subunits.

It catalyses the reaction L-glutamyl-tRNA(Gln) + L-glutamine + ATP + H2O = L-glutaminyl-tRNA(Gln) + L-glutamate + ADP + phosphate + H(+). Functionally, allows the formation of correctly charged Gln-tRNA(Gln) through the transamidation of misacylated Glu-tRNA(Gln) in organisms which lack glutaminyl-tRNA synthetase. The reaction takes place in the presence of glutamine and ATP through an activated gamma-phospho-Glu-tRNA(Gln). The polypeptide is Glutamyl-tRNA(Gln) amidotransferase subunit A (Azotobacter vinelandii (strain DJ / ATCC BAA-1303)).